A 266-amino-acid chain; its full sequence is Tryptophan synthase alpha chain (266 aa).

Residues Glu49 and Asp60 each act as proton acceptor in the active site.

It belongs to the TrpA family. Tetramer of two alpha and two beta chains.

The catalysed reaction is (1S,2R)-1-C-(indol-3-yl)glycerol 3-phosphate + L-serine = D-glyceraldehyde 3-phosphate + L-tryptophan + H2O. It functions in the pathway amino-acid biosynthesis; L-tryptophan biosynthesis; L-tryptophan from chorismate: step 5/5. In terms of biological role, the alpha subunit is responsible for the aldol cleavage of indoleglycerol phosphate to indole and glyceraldehyde 3-phosphate. In Synechococcus elongatus (strain ATCC 33912 / PCC 7942 / FACHB-805) (Anacystis nidulans R2), this protein is Tryptophan synthase alpha chain.